Reading from the N-terminus, the 758-residue chain is 5-methyltetrahydropteroyltriglutamate--homocysteine methyltransferase (758 aa).

5-methyltetrahydropteroyltri-L-glutamate-binding positions include 17–20 (RELK) and lysine 110. Residues 428–430 (IGS) and glutamate 481 each bind L-homocysteine. L-methionine contacts are provided by residues 428–430 (IGS) and glutamate 481. Residues 512-513 (RC) and tryptophan 558 contribute to the 5-methyltetrahydropteroyltri-L-glutamate site. Aspartate 596 is a binding site for L-homocysteine. An L-methionine-binding site is contributed by aspartate 596. A 5-methyltetrahydropteroyltri-L-glutamate-binding site is contributed by glutamate 602. Zn(2+) is bound by residues histidine 638, cysteine 640, and glutamate 662. Histidine 691 functions as the Proton donor in the catalytic mechanism. Residue cysteine 723 coordinates Zn(2+).

This sequence belongs to the vitamin-B12 independent methionine synthase family. Zn(2+) is required as a cofactor.

It carries out the reaction 5-methyltetrahydropteroyltri-L-glutamate + L-homocysteine = tetrahydropteroyltri-L-glutamate + L-methionine. It participates in amino-acid biosynthesis; L-methionine biosynthesis via de novo pathway; L-methionine from L-homocysteine (MetE route): step 1/1. In terms of biological role, catalyzes the transfer of a methyl group from 5-methyltetrahydrofolate to homocysteine resulting in methionine formation. The polypeptide is 5-methyltetrahydropteroyltriglutamate--homocysteine methyltransferase (Thermosynechococcus vestitus (strain NIES-2133 / IAM M-273 / BP-1)).